Here is a 408-residue protein sequence, read N- to C-terminus: LL-diaminopimelate aminotransferase (408 aa).

2 residues coordinate substrate: Tyr15 and Gly42. Pyridoxal 5'-phosphate contacts are provided by residues Tyr72, 108–109 (SK), Tyr132, Asn187, Tyr218, and 246–248 (SFS). The substrate site is built by Lys109, Tyr132, and Asn187. Lys249 bears the N6-(pyridoxal phosphate)lysine mark. Residues Arg257 and Asn291 each contribute to the pyridoxal 5'-phosphate site. Asn291 and Arg387 together coordinate substrate.

Belongs to the class-I pyridoxal-phosphate-dependent aminotransferase family. LL-diaminopimelate aminotransferase subfamily. Homodimer. Pyridoxal 5'-phosphate serves as cofactor.

The catalysed reaction is (2S,6S)-2,6-diaminopimelate + 2-oxoglutarate = (S)-2,3,4,5-tetrahydrodipicolinate + L-glutamate + H2O + H(+). The protein operates within amino-acid biosynthesis; L-lysine biosynthesis via DAP pathway; LL-2,6-diaminopimelate from (S)-tetrahydrodipicolinate (aminotransferase route): step 1/1. Its function is as follows. Involved in the synthesis of meso-diaminopimelate (m-DAP or DL-DAP), required for both lysine and peptidoglycan biosynthesis. Catalyzes the direct conversion of tetrahydrodipicolinate to LL-diaminopimelate. In Prochlorococcus marinus (strain NATL1A), this protein is LL-diaminopimelate aminotransferase.